The following is a 205-amino-acid chain: Rho-related protein racI (205 aa).

Position 12-19 (12-19) interacts with GTP; sequence GDSKTGKT. Residues 34-42 carry the Effector region motif; the sequence is YVPSHVDAT. Residues 59-63 and 119-122 each bind GTP; these read DSSAL and TKCD. Cys202 carries the post-translational modification Cysteine methyl ester. A lipid anchor (S-geranylgeranyl cysteine) is attached at Cys202. The propeptide at 203-205 is removed in mature form; that stretch reads IIQ.

The protein belongs to the small GTPase superfamily. Rho family.

The protein resides in the cell membrane. This is Rho-related protein racI (racI) from Dictyostelium discoideum (Social amoeba).